Consider the following 234-residue polypeptide: Carboxy-S-adenosyl-L-methionine synthase (234 aa).

S-adenosyl-L-methionine is bound by residues tyrosine 35, 60–62, 109–110, asparagine 124, and arginine 191; these read GCS and DI.

Belongs to the class I-like SAM-binding methyltransferase superfamily. Cx-SAM synthase family. Homodimer.

The enzyme catalyses prephenate + S-adenosyl-L-methionine = carboxy-S-adenosyl-L-methionine + 3-phenylpyruvate + H2O. Its function is as follows. Catalyzes the conversion of S-adenosyl-L-methionine (SAM) to carboxy-S-adenosyl-L-methionine (Cx-SAM). The protein is Carboxy-S-adenosyl-L-methionine synthase of Campylobacter fetus subsp. fetus (strain 82-40).